The following is a 344-amino-acid chain: Phenylalanine--tRNA ligase alpha subunit (344 aa).

A Mg(2+)-binding site is contributed by glutamate 256.

Belongs to the class-II aminoacyl-tRNA synthetase family. Phe-tRNA synthetase alpha subunit type 1 subfamily. In terms of assembly, tetramer of two alpha and two beta subunits. The cofactor is Mg(2+).

The protein localises to the cytoplasm. The enzyme catalyses tRNA(Phe) + L-phenylalanine + ATP = L-phenylalanyl-tRNA(Phe) + AMP + diphosphate + H(+). This is Phenylalanine--tRNA ligase alpha subunit from Shouchella clausii (strain KSM-K16) (Alkalihalobacillus clausii).